The following is a 172-amino-acid chain: uncharacterized protein (172 aa).

Residues 10–122 (KESKVVKTSR…FLTFVALDSN (113 aa)) enclose the HotDog ACOT-type domain. Residues 148–172 (RANERKNRKRHSQALANALGTDKPW) are disordered.

Belongs to the acyl coenzyme A hydrolase family.

This is an uncharacterized protein from Bacillus subtilis (strain 168).